A 567-amino-acid polypeptide reads, in one-letter code: Myo-inositol transporter 1 (567 aa).

Residues M1–A88 are Cytoplasmic-facing. The interval I14 to L42 is disordered. The span at T16–A33 shows a compositional bias: polar residues. A helical membrane pass occupies residues A89 to I109. Over K110–E123 the chain is Extracellular. Residues V124–S144 form a helical membrane-spanning segment. The Cytoplasmic portion of the chain corresponds to D145–R150. Residues L151–H171 traverse the membrane as a helical segment. Residues T172–R180 lie on the Extracellular side of the membrane. A helical membrane pass occupies residues F181–L201. The Cytoplasmic segment spans residues A202–R209. Residues L210–A230 traverse the membrane as a helical segment. The Extracellular segment spans residues S231–R240. Residues W241–P261 form a helical membrane-spanning segment. Residues E262–Q343 lie on the Cytoplasmic side of the membrane. A helical membrane pass occupies residues L344–N364. N-linked (GlcNAc...) asparagine glycosylation is present at N365. Residues N365–T367 are Extracellular-facing. Residues A368–V388 traverse the membrane as a helical segment. Over D389–M397 the chain is Cytoplasmic. The chain crosses the membrane as a helical span at residues L398–L418. The Extracellular segment spans residues T419–S435. Residues L436–G456 form a helical membrane-spanning segment. Residues N457–S476 lie on the Cytoplasmic side of the membrane. A helical membrane pass occupies residues I477–M497. At D498–S503 the chain is on the extracellular side. A helical transmembrane segment spans residues G504 to Y524. Topologically, residues P525 to E567 are cytoplasmic.

The protein belongs to the major facilitator superfamily. Sugar transporter (TC 2.A.1.1) family.

The protein resides in the cell membrane. It carries out the reaction myo-inositol(out) + H(+)(out) = myo-inositol(in) + H(+)(in). May function as a transporter or as a sensor for myo-inositol. This chain is Myo-inositol transporter 1, found in Cryptococcus neoformans var. grubii serotype A (strain H99 / ATCC 208821 / CBS 10515 / FGSC 9487) (Filobasidiella neoformans var. grubii).